Reading from the N-terminus, the 206-residue chain is Small ribosomal subunit protein uS5 (206 aa).

The span at 1-15 (MTDTPTKQETQSNKD) shows a compositional bias: polar residues. A disordered region spans residues 1–50 (MTDTPTKQETQSNKDNVPGAIPVEQKKNNRNDRKRNRRGDSKNLERDSDW). Residues 38–50 (RGDSKNLERDSDW) are compositionally biased toward basic and acidic residues. An S5 DRBM domain is found at 50-113 (WQERVVQIRR…SDGKKNLVRV (64 aa)).

The protein belongs to the universal ribosomal protein uS5 family. As to quaternary structure, part of the 30S ribosomal subunit. Contacts proteins S4 and S8.

With S4 and S12 plays an important role in translational accuracy. Functionally, located at the back of the 30S subunit body where it stabilizes the conformation of the head with respect to the body. The polypeptide is Small ribosomal subunit protein uS5 (Prochlorococcus marinus (strain MIT 9215)).